A 230-amino-acid chain; its full sequence is Biosynthetic peptidoglycan transglycosylase (230 aa).

The helical transmembrane segment at 11-31 (VLLVLVALFVLYQLWIFTLVL) threads the bilayer.

It belongs to the glycosyltransferase 51 family.

The protein resides in the cell inner membrane. It catalyses the reaction [GlcNAc-(1-&gt;4)-Mur2Ac(oyl-L-Ala-gamma-D-Glu-L-Lys-D-Ala-D-Ala)](n)-di-trans,octa-cis-undecaprenyl diphosphate + beta-D-GlcNAc-(1-&gt;4)-Mur2Ac(oyl-L-Ala-gamma-D-Glu-L-Lys-D-Ala-D-Ala)-di-trans,octa-cis-undecaprenyl diphosphate = [GlcNAc-(1-&gt;4)-Mur2Ac(oyl-L-Ala-gamma-D-Glu-L-Lys-D-Ala-D-Ala)](n+1)-di-trans,octa-cis-undecaprenyl diphosphate + di-trans,octa-cis-undecaprenyl diphosphate + H(+). It functions in the pathway cell wall biogenesis; peptidoglycan biosynthesis. Its function is as follows. Peptidoglycan polymerase that catalyzes glycan chain elongation from lipid-linked precursors. The sequence is that of Biosynthetic peptidoglycan transglycosylase from Aromatoleum aromaticum (strain DSM 19018 / LMG 30748 / EbN1) (Azoarcus sp. (strain EbN1)).